We begin with the raw amino-acid sequence, 42 residues long: Conotoxin Au11.6 (42 aa).

4 cysteine pairs are disulfide-bonded: cysteine 6/cysteine 20, cysteine 13/cysteine 25, cysteine 19/cysteine 30, and cysteine 24/cysteine 37.

Belongs to the conotoxin I1 superfamily. Expressed by the venom duct.

The protein resides in the secreted. This is Conotoxin Au11.6 from Conus aulicus (Princely cone).